Reading from the N-terminus, the 1707-residue chain is Kinesin-like protein KIF1A (1707 aa).

The 350-residue stretch at 5–354 (SVKVAVRVRP…LRYADRAKQI (350 aa)) folds into the Kinesin motor domain. ATP is bound by residues G102, K103, S104, Y105, and S215. S104 is a Mg(2+) binding site. Residues 439–466 (SEEAIERLKETEKIIAELNETWEEKLRR) adopt a coiled-coil conformation. The FHA domain occupies 525 to 581 (TRVGREDAERRQDIVLSGHFIKEEHCIFRSDSRGGGEAVVTLEPCEGADTYVNGKKV). 2 coiled-coil regions span residues 637 to 671 (EKQG…LLEQ) and 811 to 831 (LEKL…AAEV). Positions 657 to 1105 (QYRREREEAT…LCKDVLSPLR (449 aa)) are required for interaction with CALM1, PPFIA2 and TANC2. Disordered stretches follow at residues 1424–1462 (PVPE…EVPN) and 1536–1576 (TDVR…EKEP). Positions 1429 to 1453 (LSPASSEDSESRSSSGASSPLSAEG) are enriched in low complexity. In terms of domain architecture, PH spans 1592 to 1690 (IVSKKGYLHF…WLYAFNPLLA (99 aa)).

This sequence belongs to the TRAFAC class myosin-kinesin ATPase superfamily. Kinesin family. Unc-104 subfamily. In terms of assembly, dimeric motor; dimerization is required for ATP-driven processive motility. Monomer in vitro. Interacts with PPFIA1 and PPFIA4. Interacts with CALM1; the interaction is increased in presence of calcium and increases neuronal dense core vesicles motility. Interacts with PPFIA2 and TANC2; both interactions allow the recruitment of neuronal dense core vesicles to dendritic spines and decrease in presence of calcium. Interacts with SYT4 (unphosphorylated) and SYT11; both interactions increase in presence of calcium. Interacts with MADD.

The protein resides in the cytoplasm. The protein localises to the cytoskeleton. Its subcellular location is the cell projection. It is found in the neuron projection. It localises to the axon. The protein resides in the perinuclear region. The protein localises to the synapse. Its subcellular location is the cytoplasmic vesicle. It is found in the secretory vesicle. It localises to the neuronal dense core vesicle membrane. The enzyme catalyses ATP + H2O + a kinesin associated with a microtubule at position (n) = ADP + phosphate a kinesin associated with a microtubule at position (n+1, toward the plus end).. Kinesin motor with a plus-end-directed microtubule motor activity, involved in anterograde axonal transport of synaptic vesicle precursors. Also required for neuronal dense core vesicles (DCVs) transport to the dendritic spines and axons. The interaction calcium-dependent with CALM1 increases vesicle motility and interaction with the scaffolding proteins PPFIA2 and TANC2 recruits DCVs to synaptic sites. This chain is Kinesin-like protein KIF1A, found in Rattus norvegicus (Rat).